The primary structure comprises 276 residues: Undecaprenyl-diphosphatase (276 aa).

The next 8 membrane-spanning stretches (helical) occupy residues 6-26, 49-69, 89-109, 117-137, 151-171, 181-201, 224-244, and 256-276; these read IEIL…WLPI, EMFF…MFWN, FSLW…GILF, LHTP…FIVI, LADI…LSLI, IIGA…TFFL, AELL…VFVI, and FKVF…ITAI.

Belongs to the UppP family.

The protein resides in the cell membrane. The enzyme catalyses di-trans,octa-cis-undecaprenyl diphosphate + H2O = di-trans,octa-cis-undecaprenyl phosphate + phosphate + H(+). Catalyzes the dephosphorylation of undecaprenyl diphosphate (UPP). Confers resistance to bacitracin. The polypeptide is Undecaprenyl-diphosphatase (Enterococcus faecalis (Streptococcus faecalis)).